We begin with the raw amino-acid sequence, 91 residues long: MSFFSMCVLGAAIGMAIGTLGTGIGQGLAVKSAVEGVSRNPGASGKIMTTMMIGLAMIESLAIYALVICLIILFANPYKDIALKLAETVAK.

Transmembrane regions (helical) follow at residues 4–24 and 53–73; these read FSMC…GTGI and IGLA…LIIL.

It belongs to the ATPase C chain family. F-type ATPases have 2 components, F(1) - the catalytic core - and F(0) - the membrane proton channel. F(1) has five subunits: alpha(3), beta(3), gamma(1), delta(1), epsilon(1). F(0) has three main subunits: a(1), b(2) and c(10-14). The alpha and beta chains form an alternating ring which encloses part of the gamma chain. F(1) is attached to F(0) by a central stalk formed by the gamma and epsilon chains, while a peripheral stalk is formed by the delta and b chains.

The protein resides in the cell inner membrane. Its function is as follows. F(1)F(0) ATP synthase produces ATP from ADP in the presence of a proton or sodium gradient. F-type ATPases consist of two structural domains, F(1) containing the extramembraneous catalytic core and F(0) containing the membrane proton channel, linked together by a central stalk and a peripheral stalk. During catalysis, ATP synthesis in the catalytic domain of F(1) is coupled via a rotary mechanism of the central stalk subunits to proton translocation. Key component of the F(0) channel; it plays a direct role in translocation across the membrane. A homomeric c-ring of between 10-14 subunits forms the central stalk rotor element with the F(1) delta and epsilon subunits. This Pelobacter propionicus (strain DSM 2379 / NBRC 103807 / OttBd1) protein is ATP synthase subunit c 2.